The chain runs to 235 residues: tRNA pseudouridine synthase B (235 aa).

Catalysis depends on Asp-48, which acts as the Nucleophile.

Belongs to the pseudouridine synthase TruB family. Type 1 subfamily.

The enzyme catalyses uridine(55) in tRNA = pseudouridine(55) in tRNA. In terms of biological role, responsible for synthesis of pseudouridine from uracil-55 in the psi GC loop of transfer RNAs. This Parabacteroides distasonis (strain ATCC 8503 / DSM 20701 / CIP 104284 / JCM 5825 / NCTC 11152) protein is tRNA pseudouridine synthase B.